A 488-amino-acid polypeptide reads, in one-letter code: UDP-N-acetylmuramate--L-alanine ligase (488 aa).

Residue 122 to 128 (GTHGKTT) participates in ATP binding.

This sequence belongs to the MurCDEF family.

Its subcellular location is the cytoplasm. The catalysed reaction is UDP-N-acetyl-alpha-D-muramate + L-alanine + ATP = UDP-N-acetyl-alpha-D-muramoyl-L-alanine + ADP + phosphate + H(+). The protein operates within cell wall biogenesis; peptidoglycan biosynthesis. Its function is as follows. Cell wall formation. The chain is UDP-N-acetylmuramate--L-alanine ligase from Mycobacterium ulcerans (strain Agy99).